Here is an 87-residue protein sequence, read N- to C-terminus: MNSLLMITACLFLIGTVWAKEGYLVNKSTGCKYECFWLGKNEFCDKECKAKNQGGSYGYCYSFACWCEGLPESTSTYPLPNKSCGRK.

The N-terminal stretch at 1 to 19 is a signal peptide; the sequence is MNSLLMITACLFLIGTVWA. Residues 20 to 85 form the LCN-type CS-alpha/beta domain; sequence KEGYLVNKST…TYPLPNKSCG (66 aa). Intrachain disulfides connect Cys-31/Cys-84, Cys-35/Cys-60, Cys-44/Cys-65, and Cys-48/Cys-67. The residue at position 84 (Cys-84) is a Cysteine amide. The propeptide occupies 85–87; that stretch reads GRK.

The protein belongs to the long (4 C-C) scorpion toxin superfamily. Sodium channel inhibitor family. Beta subfamily. As to expression, expressed by the venom gland.

It is found in the secreted. Beta toxins bind voltage-independently at site-4 of sodium channels (Nav) and shift the voltage of activation toward more negative potentials thereby affecting sodium channel activation and promoting spontaneous and repetitive firing. The polypeptide is Neurotoxin Cex4 (Centruroides exilicauda (Bark scorpion)).